Here is a 477-residue protein sequence, read N- to C-terminus: Bifunctional protein HldE (477 aa).

Residues 1–318 are ribokinase; sequence MKVTLPEFER…ENAVRGRADT (318 aa). K179 carries the N6-acetyllysine modification. 195–198 is an ATP binding site; it reads NLSE. Residue D264 is part of the active site. A cytidylyltransferase region spans residues 344–477; the sequence is MTNGVFDILH…IKKIQLDKKG (134 aa).

It in the N-terminal section; belongs to the carbohydrate kinase PfkB family. The protein in the C-terminal section; belongs to the cytidylyltransferase family. Homodimer.

It carries out the reaction D-glycero-beta-D-manno-heptose 7-phosphate + ATP = D-glycero-beta-D-manno-heptose 1,7-bisphosphate + ADP + H(+). It catalyses the reaction D-glycero-beta-D-manno-heptose 1-phosphate + ATP + H(+) = ADP-D-glycero-beta-D-manno-heptose + diphosphate. It participates in nucleotide-sugar biosynthesis; ADP-L-glycero-beta-D-manno-heptose biosynthesis; ADP-L-glycero-beta-D-manno-heptose from D-glycero-beta-D-manno-heptose 7-phosphate: step 1/4. The protein operates within nucleotide-sugar biosynthesis; ADP-L-glycero-beta-D-manno-heptose biosynthesis; ADP-L-glycero-beta-D-manno-heptose from D-glycero-beta-D-manno-heptose 7-phosphate: step 3/4. Functionally, catalyzes the phosphorylation of D-glycero-D-manno-heptose 7-phosphate at the C-1 position to selectively form D-glycero-beta-D-manno-heptose-1,7-bisphosphate. Catalyzes the ADP transfer from ATP to D-glycero-beta-D-manno-heptose 1-phosphate, yielding ADP-D-glycero-beta-D-manno-heptose. The sequence is that of Bifunctional protein HldE from Escherichia coli O81 (strain ED1a).